Here is a 20-residue protein sequence, read N- to C-terminus: Cuticle-degrading protease-like protein (20 aa).

A disordered region spans residues 1–20 (AIVEQQGAPXGLGRIINKXK).

This sequence belongs to the peptidase S8 family.

The protein localises to the secreted. Capable of breaching the insect cuticle. The protein is Cuticle-degrading protease-like protein of Metacordyceps chlamydosporia (Nematophagous fungus).